The following is a 392-amino-acid chain: G2/mitotic-specific cyclin-B2 (392 aa).

The protein belongs to the cyclin family. Cyclin AB subfamily. Interacts with the CDK1 protein kinase to form a serine/threonine kinase holoenzyme complex also known as maturation promoting factor (MPF). The cyclin subunit imparts substrate specificity to the complex.

Essential for the control of the cell cycle at the G2/M (mitosis) transition. In Rana japonica (Japanese reddish frog), this protein is G2/mitotic-specific cyclin-B2 (CCNB2).